Here is a 152-residue protein sequence, read N- to C-terminus: Clitocypin-4/-3 (152 aa).

It belongs to the protease inhibitor I48 family. Homodimer.

Its function is as follows. Binds and inhibits cysteine proteinases. Inhibits most strongly papain and cathepsin L, more weakly bromelain and cathepsin B while it is completely ineffective against cathepsin H. This is Clitocypin-4/-3 (clt4) from Clitocybe nebularis (Clouded agaric).